The chain runs to 778 residues: Endonuclease MutS2 (778 aa).

328–335 (GPNTGGKT) provides a ligand contact to ATP. Residues 702-777 (LDLRGKRYEE…GSGATIVTFK (76 aa)) form the Smr domain.

It belongs to the DNA mismatch repair MutS family. MutS2 subfamily. In terms of assembly, homodimer. Binds to stalled ribosomes, contacting rRNA.

Functionally, endonuclease that is involved in the suppression of homologous recombination and thus may have a key role in the control of bacterial genetic diversity. In terms of biological role, acts as a ribosome collision sensor, splitting the ribosome into its 2 subunits. Detects stalled/collided 70S ribosomes which it binds and splits by an ATP-hydrolysis driven conformational change. Acts upstream of the ribosome quality control system (RQC), a ribosome-associated complex that mediates the extraction of incompletely synthesized nascent chains from stalled ribosomes and their subsequent degradation. Probably generates substrates for RQC. The chain is Endonuclease MutS2 from Streptococcus pneumoniae (strain ATCC 700669 / Spain 23F-1).